A 488-amino-acid chain; its full sequence is 3-octaprenyl-4-hydroxybenzoate carboxy-lyase (488 aa).

Residue N172 coordinates Mn(2+). Prenylated FMN is bound by residues 175-177, 189-191, and 194-195; these read IYR, RWL, and RG. E238 contributes to the Mn(2+) binding site. The Proton donor role is filled by D287.

The protein belongs to the UbiD family. As to quaternary structure, homohexamer. Prenylated FMN is required as a cofactor. Mn(2+) serves as cofactor.

The protein localises to the cell membrane. It catalyses the reaction a 4-hydroxy-3-(all-trans-polyprenyl)benzoate + H(+) = a 2-(all-trans-polyprenyl)phenol + CO2. Its pathway is cofactor biosynthesis; ubiquinone biosynthesis. Catalyzes the decarboxylation of 3-octaprenyl-4-hydroxy benzoate to 2-octaprenylphenol, an intermediate step in ubiquinone biosynthesis. The protein is 3-octaprenyl-4-hydroxybenzoate carboxy-lyase of Shewanella oneidensis (strain ATCC 700550 / JCM 31522 / CIP 106686 / LMG 19005 / NCIMB 14063 / MR-1).